The following is a 441-amino-acid chain: Deoxyguanosinetriphosphate triphosphohydrolase-like protein (441 aa).

Positions 1–27 are disordered; it reads MTSSVWQERRHGEDKQRRNDHRSPYQR. Residues 7–27 show a composition bias toward basic and acidic residues; it reads QERRHGEDKQRRNDHRSPYQR. In terms of domain architecture, HD spans 59–252; that stretch reads RLTHSLEVSQ…MELADDIAYA (194 aa).

The protein belongs to the dGTPase family. Type 2 subfamily.

This is Deoxyguanosinetriphosphate triphosphohydrolase-like protein from Shewanella oneidensis (strain ATCC 700550 / JCM 31522 / CIP 106686 / LMG 19005 / NCIMB 14063 / MR-1).